The chain runs to 661 residues: Probable urea active transporter 3 (661 aa).

15 helical membrane-spanning segments follow: residues 13 to 33, 56 to 76, 86 to 106, 132 to 152, 165 to 185, 197 to 217, 251 to 271, 288 to 308, 352 to 372, 397 to 417, 419 to 439, 454 to 474, 495 to 515, 556 to 576, and 591 to 611; these read GIVI…TYVL, GLIS…LTSA, GSMW…VIAL, AVFL…LLLG, VVAA…SGGL, VIVY…SVHI, AVFV…CDPS, YFAG…AAAL, AGVL…LVAF, VTHV…VLFN, IGIT…PAVF, GMII…VGSC, VGNF…SYFF, IGIF…PLPM, and WIIV…FYPL.

Belongs to the sodium:solute symporter (SSF) (TC 2.A.21) family.

It localises to the membrane. Its subcellular location is the golgi apparatus membrane. Its function is as follows. Involved in active transport of urea. In Schizosaccharomyces pombe (strain 972 / ATCC 24843) (Fission yeast), this protein is Probable urea active transporter 3 (dur3-3).